The primary structure comprises 372 residues: Cytochrome b (372 aa).

Helical transmembrane passes span 25–45 (FGSM…FLAI), 69–90 (WIMQ…YIHI), 105–125 (WLSG…GYVL), and 170–190 (FFAL…IHIM). 2 residues coordinate heme b: H75 and H89. Positions 174 and 188 each coordinate heme b. A ubiquinone is bound at residue H193. A run of 4 helical transmembrane segments spans residues 218–238 (YKDM…LSFS), 280–300 (LGGT…PFTH), 312–332 (LSQI…WTAS), and 339–358 (FILI…IMAP).

It belongs to the cytochrome b family. In terms of assembly, the cytochrome bc1 complex contains 3 respiratory subunits (MT-CYB, CYC1 and UQCRFS1), 2 core proteins (UQCRC1 and UQCRC2) and probably 6 low-molecular weight proteins. The cofactor is heme b.

Its subcellular location is the mitochondrion inner membrane. Functionally, component of the ubiquinol-cytochrome c reductase complex (complex III or cytochrome b-c1 complex) that is part of the mitochondrial respiratory chain. The b-c1 complex mediates electron transfer from ubiquinol to cytochrome c. Contributes to the generation of a proton gradient across the mitochondrial membrane that is then used for ATP synthesis. In Hemachatus haemachatus (Rinkhals), this protein is Cytochrome b (MT-CYB).